The sequence spans 140 residues: Nucleoside diphosphate kinase (140 aa).

The ATP site is built by lysine 11, phenylalanine 59, arginine 87, threonine 93, arginine 104, and asparagine 114. Histidine 117 acts as the Pros-phosphohistidine intermediate in catalysis.

Belongs to the NDK family. The cofactor is Mg(2+).

Its subcellular location is the cytoplasm. The catalysed reaction is a 2'-deoxyribonucleoside 5'-diphosphate + ATP = a 2'-deoxyribonucleoside 5'-triphosphate + ADP. It catalyses the reaction a ribonucleoside 5'-diphosphate + ATP = a ribonucleoside 5'-triphosphate + ADP. Major role in the synthesis of nucleoside triphosphates other than ATP. The ATP gamma phosphate is transferred to the NDP beta phosphate via a ping-pong mechanism, using a phosphorylated active-site intermediate. This chain is Nucleoside diphosphate kinase, found in Metallosphaera sedula (strain ATCC 51363 / DSM 5348 / JCM 9185 / NBRC 15509 / TH2).